A 199-amino-acid polypeptide reads, in one-letter code: MTLTVLTIVIIVGAYLAGSVSSAVLVCKIRGLPDPRTQGSGNPGATNVLRIGGASSAALVLFCDMLKGAAPAYLAFRLGVDPIALGVIAIAACLGHIFPIFFGFKGGKGVATAFGAMAPIGHDLALCLLASWIVLVLVTRYSSFAAICTALLAPVYTWWLDDRFTIPVAMLSTLIVIRHKDNIKRLLKGEESKVSRKKT.

Transmembrane regions (helical) follow at residues 5 to 25, 56 to 76, 83 to 103, 118 to 138, and 141 to 161; these read VLTI…SAVL, SAAL…YLAF, IALG…IFFG, APIG…LVLV, and YSSF…WWLD.

Belongs to the PlsY family. As to quaternary structure, probably interacts with PlsX.

The protein localises to the cell inner membrane. It carries out the reaction an acyl phosphate + sn-glycerol 3-phosphate = a 1-acyl-sn-glycero-3-phosphate + phosphate. It functions in the pathway lipid metabolism; phospholipid metabolism. Catalyzes the transfer of an acyl group from acyl-phosphate (acyl-PO(4)) to glycerol-3-phosphate (G3P) to form lysophosphatidic acid (LPA). This enzyme utilizes acyl-phosphate as fatty acyl donor, but not acyl-CoA or acyl-ACP. The sequence is that of Glycerol-3-phosphate acyltransferase from Shewanella halifaxensis (strain HAW-EB4).